Reading from the N-terminus, the 937-residue chain is Vacuolar membrane protease (937 aa).

Over 1–16 (PNGFVKFIRSIFGYRK) the chain is Cytoplasmic. Residues 17-37 (TSLTLFVILTYVAVLLLAYLD) traverse the membrane as a helical segment. Over 38–373 (HSLYYSVDLP…FPTSQVVVAS (336 aa)) the chain is Vacuolar. Residues asparagine 106 and asparagine 140 are each glycosylated (N-linked (GlcNAc...) asparagine). Zn(2+) is bound by residues histidine 154 and aspartate 166. The active-site Proton acceptor is the glutamate 201. Zn(2+)-binding residues include glutamate 202, glutamate 227, and histidine 300. Residues 374–394 (ILLLVLIPGISIPFLIIIFGY) form a helical membrane-spanning segment. Residues 395–407 (KKNWELSFVNVTK) are Cytoplasmic-facing. A helical membrane pass occupies residues 408–428 (FPISLAISAALLNLFTNGFIV). Residues 429-437 (PFNQFLPNS) are Vacuolar-facing. A helical transmembrane segment spans residues 438 to 458 (SPFALVAILFATFLLLNYLIL). Over 459-475 (NGINLIFVSYKIVNHDE) the chain is Cytoplasmic. Residues 476-496 (KLISIIETSFLYWVVLIYSTA) traverse the membrane as a helical segment. At 497-510 (KLANNVIGDDHSGE) the chain is on the vacuolar side. The chain crosses the membrane as a helical span at residues 511–531 (FPIIFLCALQAVASIFGLIGW). Topologically, residues 532-580 (SFKPVPKEHYVVVPQEEAEPLLGSSDNFNYGSPDVEDDRLVSDGSYDWS) are cytoplasmic. Residues 581–601 (IQFLTIVPISTYLIYNSGFLV) traverse the membrane as a helical segment. At 602–618 (VDGINKSIQESLISQNL) the chain is on the vacuolar side. Residue asparagine 606 is glycosylated (N-linked (GlcNAc...) asparagine). A helical membrane pass occupies residues 619–639 (IYKLLQTFAISLSIPLLPFIF). Residues 640 to 643 (KVNR) lie on the Cytoplasmic side of the membrane. Residues 644–664 (LFVLALFLISTIGVLFVATAD) traverse the membrane as a helical segment. Residues 665 to 937 (SFNVANPLKL…LVSVSKTVEL (273 aa)) are Vacuolar-facing. Residues asparagine 758, asparagine 870, and asparagine 887 are each glycosylated (N-linked (GlcNAc...) asparagine).

It belongs to the peptidase M28 family. Zn(2+) is required as a cofactor.

The protein resides in the vacuole membrane. May be involved in vacuolar sorting and osmoregulation. This chain is Vacuolar membrane protease, found in Scheffersomyces stipitis (strain ATCC 58785 / CBS 6054 / NBRC 10063 / NRRL Y-11545) (Yeast).